Here is a 233-residue protein sequence, read N- to C-terminus: MWGYLSLMPVFLAVWAISGVWIVFAIAVTNRTVDLSKGFPYISICGSFPPQSCIFSQVLNMGAALAAWICIVRYHQLRDWGVRRWPNQLILWTGLLCALGTSVVGNFQEKNQRPTHLAGAFLAFILGNVYFWLQLLLWRLKRLPQPGAAWIGPLRLGLCSVCTILIVAMIVLHACSLRSVSAACEWVVAMLLFALFGLLAVDFSALESCTLCVQPWPSLSPPPASPISLPVQL.

Residues 1-7 (MWGYLSL) lie on the Cytoplasmic side of the membrane. The chain crosses the membrane as a helical span at residues 8 to 28 (MPVFLAVWAISGVWIVFAIAV). At 29–51 (TNRTVDLSKGFPYISICGSFPPQ) the chain is on the extracellular side. Residue Asn-30 is glycosylated (N-linked (GlcNAc...) asparagine). A helical membrane pass occupies residues 52-72 (SCIFSQVLNMGAALAAWICIV). The Cytoplasmic portion of the chain corresponds to 73 to 84 (RYHQLRDWGVRR). A helical transmembrane segment spans residues 85-105 (WPNQLILWTGLLCALGTSVVG). At 106–116 (NFQEKNQRPTH) the chain is on the extracellular side. The chain crosses the membrane as a helical span at residues 117–137 (LAGAFLAFILGNVYFWLQLLL). Residues 138 to 155 (WRLKRLPQPGAAWIGPLR) are Cytoplasmic-facing. Residues 156–176 (LGLCSVCTILIVAMIVLHACS) traverse the membrane as a helical segment. Topologically, residues 177-185 (LRSVSAACE) are extracellular. Residues 186–206 (WVVAMLLFALFGLLAVDFSAL) traverse the membrane as a helical segment. Residues 207–233 (ESCTLCVQPWPSLSPPPASPISLPVQL) are Cytoplasmic-facing.

Belongs to the DRAM/TMEM150 family. As to expression, highly expressed in the colon and lung with comparatively high levels also detectable in the lymph nodes, placenta, duodenum, peripheral blood mononuclear cells and spleen.

It is found in the cell membrane. Its subcellular location is the endosome membrane. It localises to the cytoplasmic vesicle. The protein resides in the autophagosome membrane. Its function is as follows. Modulator of macroautophagy that causes accumulation of autophagosomes under basal conditions and enhances autophagic flux. Represses cell death and promotes long-term clonogenic survival of cells grown in the absence of glucose in a macroautophagy-independent manner. May have some role in extracellular matrix engulfment or growth factor receptor recycling, both of which can modulate cell survival. The chain is Modulator of macroautophagy TMEM150B from Homo sapiens (Human).